Reading from the N-terminus, the 336-residue chain is N-acetyl-gamma-glutamyl-phosphate reductase (336 aa).

The active site involves Cys-144.

It belongs to the NAGSA dehydrogenase family. Type 1 subfamily.

Its subcellular location is the cytoplasm. The catalysed reaction is N-acetyl-L-glutamate 5-semialdehyde + phosphate + NADP(+) = N-acetyl-L-glutamyl 5-phosphate + NADPH + H(+). The protein operates within amino-acid biosynthesis; L-arginine biosynthesis; N(2)-acetyl-L-ornithine from L-glutamate: step 3/4. In terms of biological role, catalyzes the NADPH-dependent reduction of N-acetyl-5-glutamyl phosphate to yield N-acetyl-L-glutamate 5-semialdehyde. This chain is N-acetyl-gamma-glutamyl-phosphate reductase, found in Methanosarcina acetivorans (strain ATCC 35395 / DSM 2834 / JCM 12185 / C2A).